The following is a 394-amino-acid chain: NAD(P)H-quinone oxidoreductase subunit H 2 (394 aa).

It belongs to the complex I 49 kDa subunit family. NDH-1 can be composed of about 15 different subunits; different subcomplexes with different compositions have been identified which probably have different functions.

The protein localises to the cell inner membrane. It catalyses the reaction a plastoquinone + NADH + (n+1) H(+)(in) = a plastoquinol + NAD(+) + n H(+)(out). It carries out the reaction a plastoquinone + NADPH + (n+1) H(+)(in) = a plastoquinol + NADP(+) + n H(+)(out). Functionally, NDH-1 shuttles electrons from an unknown electron donor, via FMN and iron-sulfur (Fe-S) centers, to quinones in the respiratory and/or the photosynthetic chain. The immediate electron acceptor for the enzyme in this species is believed to be plastoquinone. Couples the redox reaction to proton translocation, and thus conserves the redox energy in a proton gradient. Cyanobacterial NDH-1 also plays a role in inorganic carbon-concentration. In Gloeobacter violaceus (strain ATCC 29082 / PCC 7421), this protein is NAD(P)H-quinone oxidoreductase subunit H 2.